Here is a 534-residue protein sequence, read N- to C-terminus: Pentatricopeptide repeat-containing protein At2g20540 (534 aa).

11 PPR repeats span residues 41 to 71 (SSFM…VSNP), 72 to 106 (NVFL…SFEL), 108 to 142 (DRFT…GPRF), 143 to 173 (HVVT…MYER), 174 to 208 (DVIS…TIVS), 209 to 239 (WTAM…GIEP), 240 to 274 (DEIS…GFLK), 275 to 305 (QTGV…MEGK), 306 to 340 (DVIS…KVKP), 341 to 371 (NGIT…MRQD), and 377 to 407 (KIEH…MPMK). The type E motif stretch occupies residues 412-487 (IWGSLLSSCR…TPGGSLIEVN (76 aa)). Residues 488–518 (NIVQEFVSGDNSKPFWTEISIVLQLFTSHQD) form a type E(+) motif region.

It belongs to the PPR family. PCMP-E subfamily.

This is Pentatricopeptide repeat-containing protein At2g20540 (PCMP-E78) from Arabidopsis thaliana (Mouse-ear cress).